A 67-amino-acid chain; its full sequence is ATP synthase F(0) complex subunit 8 (67 aa).

Residues 8–24 (TWFITIISSMATLFILF) form a helical membrane-spanning segment. Lys-54 is subject to N6-acetyllysine; alternate. The residue at position 54 (Lys-54) is an N6-succinyllysine; alternate. The residue at position 57 (Lys-57) is an N6-acetyllysine.

It belongs to the ATPase protein 8 family. As to quaternary structure, component of the ATP synthase complex composed at least of ATP5F1A/subunit alpha, ATP5F1B/subunit beta, ATP5MC1/subunit c (homooctomer), MT-ATP6/subunit a, MT-ATP8/subunit 8, ATP5ME/subunit e, ATP5MF/subunit f, ATP5MG/subunit g, ATP5MK/subunit k, ATP5MJ/subunit j, ATP5F1C/subunit gamma, ATP5F1D/subunit delta, ATP5F1E/subunit epsilon, ATP5PF/subunit F6, ATP5PB/subunit b, ATP5PD/subunit d, ATP5PO/subunit OSCP. ATP synthase complex consists of a soluble F(1) head domain (subunits alpha(3) and beta(3)) - the catalytic core - and a membrane F(0) domain - the membrane proton channel (subunits c, a, 8, e, f, g, k and j). These two domains are linked by a central stalk (subunits gamma, delta, and epsilon) rotating inside the F1 region and a stationary peripheral stalk (subunits F6, b, d, and OSCP). Interacts with PRICKLE3.

It is found in the mitochondrion membrane. Functionally, subunit 8, of the mitochondrial membrane ATP synthase complex (F(1)F(0) ATP synthase or Complex V) that produces ATP from ADP in the presence of a proton gradient across the membrane which is generated by electron transport complexes of the respiratory chain. ATP synthase complex consist of a soluble F(1) head domain - the catalytic core - and a membrane F(1) domain - the membrane proton channel. These two domains are linked by a central stalk rotating inside the F(1) region and a stationary peripheral stalk. During catalysis, ATP synthesis in the catalytic domain of F(1) is coupled via a rotary mechanism of the central stalk subunits to proton translocation. In vivo, can only synthesize ATP although its ATP hydrolase activity can be activated artificially in vitro. Part of the complex F(0) domain. The sequence is that of ATP synthase F(0) complex subunit 8 from Rattus norvegicus (Rat).